The chain runs to 373 residues: MKLFLEKSRFLRFLENTTKIIESNNSNYELRGAYFQVRQDKIILISSNEDISIKNEYLLDGIKNKTEGESDFLVLNSLLKNIIKKCSDSIILEKEKNTLKIFSDLQSYEINLLDHERFPDIKFGLNNSQLQLKTEQFKQALKNVVFAADLSNAQELLLNSVNLSLKNNILTLVATNRARIAMQKIKTEDSQEFNLTINSKVVKELISLSMSNTLILSPGTFELKIKSGNLEIKTKVIEIPYMNVENVFPNKFNFVIHIDKKELLSLIDKVSIVNDEKNGNKILIEYNPSKKEKKLKLSSYWPDLGFSEVFSDNFEVESEILLKFFINANYLKESINVFDGMISIFITENKDRMVISSETNLNNKQLIAALRGH.

This sequence belongs to the beta sliding clamp family. As to quaternary structure, forms a ring-shaped head-to-tail homodimer around DNA which binds and tethers DNA polymerases and other proteins to the DNA. The DNA replisome complex has a single clamp-loading complex (3 tau and 1 each of delta, delta', psi and chi subunits) which binds 3 Pol III cores (1 core on the leading strand and 2 on the lagging strand) each with a beta sliding clamp dimer. Additional proteins in the replisome are other copies of gamma, psi and chi, Ssb, DNA helicase and RNA primase.

The protein localises to the cytoplasm. Functionally, confers DNA tethering and processivity to DNA polymerases and other proteins. Acts as a clamp, forming a ring around DNA (a reaction catalyzed by the clamp-loading complex) which diffuses in an ATP-independent manner freely and bidirectionally along dsDNA. Initially characterized for its ability to contact the catalytic subunit of DNA polymerase III (Pol III), a complex, multichain enzyme responsible for most of the replicative synthesis in bacteria; Pol III exhibits 3'-5' exonuclease proofreading activity. The beta chain is required for initiation of replication as well as for processivity of DNA replication. In Mycoplasmopsis pulmonis (strain UAB CTIP) (Mycoplasma pulmonis), this protein is Beta sliding clamp (dnaN).